Here is a 397-residue protein sequence, read N- to C-terminus: Ribosomal RNA large subunit methyltransferase I (397 aa).

The region spanning 2-80 (SAAIYLVKGR…QDINRAFFVK (79 aa)) is the PUA domain.

The protein belongs to the methyltransferase superfamily. RlmI family.

Its subcellular location is the cytoplasm. It carries out the reaction cytidine(1962) in 23S rRNA + S-adenosyl-L-methionine = 5-methylcytidine(1962) in 23S rRNA + S-adenosyl-L-homocysteine + H(+). In terms of biological role, specifically methylates the cytosine at position 1962 (m5C1962) of 23S rRNA. The polypeptide is Ribosomal RNA large subunit methyltransferase I (Vibrio vulnificus (strain CMCP6)).